The following is a 638-amino-acid chain: Plasma kallikrein (638 aa).

An N-terminal signal peptide occupies residues 1 to 19 (MILFKQVGYFVSLFATVSC). 4 Apple domains span residues 21 to 104 (CLSQ…LKQC), 111 to 194 (CHQD…LKSC), 201 to 284 (CPMD…LFTC), and 292 to 375 (CHFK…LRLC). Cystine bridges form between Cys-21/Cys-104, Cys-47/Cys-77, Cys-51/Cys-57, Cys-111/Cys-194, Cys-137/Cys-166, Cys-141/Cys-147, Cys-201/Cys-284, Cys-227/Cys-256, Cys-231/Cys-237, Cys-292/Cys-375, Cys-318/Cys-347, Cys-322/Cys-328, Cys-340/Cys-345, Cys-383/Cys-503, Cys-419/Cys-435, Cys-517/Cys-584, Cys-548/Cys-563, and Cys-574/Cys-602. A glycan (N-linked (GlcNAc...) asparagine) is linked at Asn-127. Asn-215 is a glycosylation site (N-linked (GlcNAc...) asparagine). N-linked (GlcNAc...) asparagine glycosylation is present at Asn-308. The 236-residue stretch at 391–626 (IVGGTNSSLG…YIDWILEKIQ (236 aa)) folds into the Peptidase S1 domain. The N-linked (GlcNAc...) asparagine glycan is linked to Asn-396. His-434 serves as the catalytic Charge relay system. Residue Asn-453 is glycosylated (N-linked (GlcNAc...) asparagine). Asp-483 (charge relay system) is an active-site residue. N-linked (GlcNAc...) asparagine glycosylation is present at Asn-494. Ser-578 functions as the Charge relay system in the catalytic mechanism.

The protein belongs to the peptidase S1 family. Plasma kallikrein subfamily. In terms of assembly, forms a heterodimer with SERPINA5. The zymogen is activated by factor XIIa, which cleaves the molecule into a light chain, which contains the active site, and a heavy chain, which associates with HMW kininogen. These chains are linked by one or more disulfide bonds.

The protein resides in the secreted. The catalysed reaction is Cleaves selectively Arg-|-Xaa and Lys-|-Xaa bonds, including Lys-|-Arg and Arg-|-Ser bonds in (human) kininogen to release bradykinin.. Its activity is regulated as follows. Inhibited by SERPINA5. Its function is as follows. The enzyme cleaves Lys-Arg and Arg-Ser bonds. It activates, in a reciprocal reaction, factor XII after its binding to a negatively charged surface. It also releases bradykinin from HMW kininogen and may also play a role in the renin-angiotensin system by converting prorenin into renin. The protein is Plasma kallikrein (Klkb1) of Rattus norvegicus (Rat).